Consider the following 54-residue polypeptide: uncharacterized protein (54 aa).

Positions V13 to E54 are disordered. Over residues N20–A32 the composition is skewed to polar residues. Residues I41–E54 show a composition bias toward basic and acidic residues.

This is an uncharacterized protein from Enterobacteria phage T4 (Bacteriophage T4).